We begin with the raw amino-acid sequence, 217 residues long: MAARCVRLARRSLPALALSFRPSPRLLCTATKQKNNGQNLEEDLGHCEPKTDPSSADKTLLEEKVKLEEQLKETMEKYKRALADTENLRQRSQKLVEEAKLYGIQGFCKDLLEVADILEKATQSVPKEEVSNNNPHLKSLYEGLVMTEVQIQKVFTKHGLLRLDPIGAKFDPYEHEALFHTPVEGKEPGTVALVSKVGYKLHGRTLRPALVGVVKDA.

The N-terminal 27 residues, 1–27, are a transit peptide targeting the mitochondrion; it reads MAARCVRLARRSLPALALSFRPSPRLL. Lysine 94 bears the N6-acetyllysine; alternate mark. Residue lysine 94 is modified to N6-succinyllysine; alternate. The residue at position 100 (lysine 100) is an N6-acetyllysine. An N6-succinyllysine modification is found at lysine 120. Lysine 215 carries the N6-acetyllysine; alternate modification. An N6-succinyllysine; alternate modification is found at lysine 215.

Belongs to the GrpE family. As to quaternary structure, probable component of the PAM complex at least composed of a mitochondrial HSP70 protein, GRPEL1 or GRPEL2, TIMM44, TIMM16/PAM16 and TIMM14/DNAJC19. Binds to HSP70, HSC70 and HSJ1B. As to expression, ubiquitous. Particularly abundant in heart, kidney and liver.

It localises to the mitochondrion matrix. Its function is as follows. Essential component of the PAM complex, a complex required for the translocation of transit peptide-containing proteins from the inner membrane into the mitochondrial matrix in an ATP-dependent manner. Seems to control the nucleotide-dependent binding of mitochondrial HSP70 to substrate proteins. The polypeptide is GrpE protein homolog 1, mitochondrial (Grpel1) (Rattus norvegicus (Rat)).